Here is a 585-residue protein sequence, read N- to C-terminus: Glutamate decarboxylase 2 (585 aa).

Low complexity predominate over residues 1–14 (MASPGSGFWSFGSE). The tract at residues 1–24 (MASPGSGFWSFGSEDGSGDSENPG) is disordered. A phosphoserine mark is found at serine 3, serine 6, serine 10, and serine 13. 2 S-palmitoyl cysteine lipidation sites follow: cysteine 30 and cysteine 45. 181 to 183 (QLS) lines the substrate pocket. Lysine 396 carries the post-translational modification N6-(pyridoxal phosphate)lysine. A substrate-binding site is contributed by arginine 558.

The protein belongs to the group II decarboxylase family. Homodimer. It depends on pyridoxal 5'-phosphate as a cofactor. Phosphorylated; which does not affect kinetic parameters or subcellular location. In terms of processing, palmitoylated; which is required for presynaptic clustering.

Its subcellular location is the cytoplasm. It localises to the cytosol. The protein localises to the cytoplasmic vesicle. It is found in the presynaptic cell membrane. The protein resides in the golgi apparatus membrane. It carries out the reaction L-glutamate + H(+) = 4-aminobutanoate + CO2. Catalyzes the production of GABA. This Homo sapiens (Human) protein is Glutamate decarboxylase 2.